We begin with the raw amino-acid sequence, 131 residues long: U-scoloptoxin-Er5e (131 aa).

The first 22 residues, M1–G22, serve as a signal peptide directing secretion. Positions E23–R94 are excised as a propeptide. RLWRNWE repeat units follow at residues R34–E40, R61–E67, and R86–E92. Residue Q95 is modified to Pyrrolidone carboxylic acid. The stretch at E107–E113 is one RLWRNWE 4; approximate repeat. The propeptide occupies W112–G131.

Belongs to the scoloptoxin-08 family. In terms of tissue distribution, expressed by the venom gland.

Its subcellular location is the secreted. The chain is U-scoloptoxin-Er5e from Ethmostigmus rubripes (Giant centipede).